The following is a 347-amino-acid chain: Ribosomal RNA large subunit methyltransferase M (347 aa).

S-adenosyl-L-methionine-binding positions include serine 184, 217–220 (APGG), aspartate 236, aspartate 256, and aspartate 272. Lysine 301 acts as the Proton acceptor in catalysis.

It belongs to the class I-like SAM-binding methyltransferase superfamily. RNA methyltransferase RlmE family. RlmM subfamily. As to quaternary structure, monomer.

It is found in the cytoplasm. The catalysed reaction is cytidine(2498) in 23S rRNA + S-adenosyl-L-methionine = 2'-O-methylcytidine(2498) in 23S rRNA + S-adenosyl-L-homocysteine + H(+). Its function is as follows. Catalyzes the 2'-O-methylation at nucleotide C2498 in 23S rRNA. This chain is Ribosomal RNA large subunit methyltransferase M, found in Xanthomonas oryzae pv. oryzae (strain PXO99A).